A 777-amino-acid polypeptide reads, in one-letter code: Nuclear autoantigenic sperm protein (777 aa).

Alanine 2 bears the N-acetylalanine mark. Lysine 34 is subject to N6-acetyllysine. A TPR 1 repeat occupies 44–77; sequence AKKLLGLGQKHLVMGDIPAAVNAFQEAASLLGKK. Residues 117-128 are histone-binding; it reads EEEEGEKTEEES. Threonine 124 is subject to Phosphothreonine. Residue serine 128 is modified to Phosphoserine. Composition is skewed to basic and acidic residues over residues 152–186, 227–259, and 267–276; these read MGEKEAQKTEDKSLVKPEMDKEQETEMEKGGREDM, VTSKKPDQEIPGAEEGKSVSETDVQEECREKGG, and IEEKPKEASK. A disordered region spans residues 152–496; sequence MGEKEAQKTE…ALENKSLQEN (345 aa). Residues 211 to 244 are histone-binding; the sequence is EEGKGAAAPEGLSEAEVTSKKPDQEIPGAEEGKS. Lysine 243 carries the N6-acetyllysine modification. Position 244 is a phosphoserine (serine 244). Lysine 285 carries the post-translational modification N6-acetyllysine. Residues 303-319 show a composition bias toward basic and acidic residues; sequence DEPKEQVAASESERGKA. At serine 312 the chain carries Phosphoserine. The segment covering 342 to 353 has biased composition (low complexity); that stretch reads AADASAAEAGSE. Phosphoserine is present on residues serine 399, serine 411, and serine 440. Residues 458–501 form a histone-binding region; sequence EQMKEGEETEGSEEEDKENDKAEETLNDSALENKSLQENEEEEI. The span at 464–474 shows a compositional bias: acidic residues; the sequence is EETEGSEEEDK. Position 466 is a phosphothreonine (threonine 466). Phosphoserine is present on residues serine 469, serine 486, and serine 492. A compositionally biased stretch (polar residues) spans 484-493; sequence NDSALENKSL. 2 TPR repeats span residues 531-564 and 573-606; these read AQAHLKLGEVSVESENYLQAVEEFQACLNLQEQY and AETHYQLGLAYGYNSQYDEAVAQFSKSIEVIEKR. Positions 593–648 form a coiled coil; sequence VAQFSKSIEVIEKRMAVLNEQMKEAEGSPTEYEKEIEELKELLPEIREKIEDAKES. A Phosphoserine modification is found at serine 651. The span at 667–681 shows a compositional bias: low complexity; sequence STSGFTPSGGSSSVS. Positions 667 to 777 are disordered; that stretch reads STSGFTPSGG…AGATVESTAC (111 aa). Threonine 672 carries the post-translational modification Phosphothreonine. Serine 694 and serine 695 each carry phosphoserine. The Nuclear localization signal signature appears at 705–711; it reads VRKKRKP. A compositionally biased stretch (basic and acidic residues) spans 710–728; that stretch reads KPEEESPRKDDAKKAKQEP. Serine 715 is modified (phosphoserine). Lysine 725 participates in a covalent cross-link: Glycyl lysine isopeptide (Lys-Gly) (interchain with G-Cter in SUMO1). At serine 734 the chain carries Phosphoserine.

The protein belongs to the NASP family. Binds to linker H1 histones. Interacts with histones H2A, H2B, H3 and H4. Interacts with histone H3.3. Interacts with histones H3 and H4; NASP is a histone chaperone that stabilizes and maintains a soluble pool of histone H3-H4 dimers. Interacts with ASF1A and ASF1B; the interaction is probably indirect and mediated by H3-H4. Also binds to HSP90 in the cytoplasm. This interaction stimulates binding of NASP to H1-6/H1T.

It is found in the cytoplasm. Its subcellular location is the nucleus. Component of the histone chaperone network. Binds and stabilizes histone H3-H4 not bound to chromatin to maintain a soluble reservoir and modulate degradation by chaperone-mediated autophagy. Required for DNA replication, normal cell cycle progression and cell proliferation. Forms a cytoplasmic complex with HSP90 and H1 linker histones and stimulates HSP90 ATPase activity. NASP and H1 histone are subsequently released from the complex and translocate to the nucleus where the histone is released for binding to DNA. The sequence is that of Nuclear autoantigenic sperm protein from Bos taurus (Bovine).